Reading from the N-terminus, the 615-residue chain is Increased rDNA silencing protein 4 (615 aa).

Disordered stretches follow at residues 38 to 135 (SNEV…SSHS), 152 to 260 (LLGI…NRSQ), 277 to 304 (PSIA…NYSS), and 323 to 445 (KPKH…NEDK). A compositionally biased stretch (polar residues) spans 50-65 (VSRNPQTRLSEPSLQK). Composition is skewed to low complexity over residues 121-135 (HSQS…SSHS) and 157-168 (SRSSSRNGSNES). Phosphoserine is present on Ser-180. Residues 184–198 (LLTSFSSGRRLSSSS) are compositionally biased toward low complexity. Residues 248–260 (NPDTSDVISNRSQ) show a composition bias toward polar residues. Residues 281–290 (SSNTTTTTSN) show a composition bias toward low complexity. A compositionally biased stretch (basic and acidic residues) spans 365 to 377 (ENDHASSLHEGNL). The span at 389–402 (DVYDDTDSDSESDQ) shows a compositional bias: acidic residues. Residues 409–438 (KPRKRDRIKRKIRNSANKTAHHRPIHRTRD) are compositionally biased toward basic residues. Positions 460–571 (ERKRYESMWV…QCVWDSVDRY (112 aa)) constitute an EH domain.

This sequence belongs to the IRS4 family. In terms of assembly, interacts with INP51.

With TAX4, acts as a positive regulator of INP51 activity and phosphatidylinositol 4,5-bisphosphate turnover. Negatively regulates signaling through the cell integrity pathway, including the MAP kinase SLT2. Also seems to be involved in rDNA silencing. The polypeptide is Increased rDNA silencing protein 4 (IRS4) (Saccharomyces cerevisiae (strain ATCC 204508 / S288c) (Baker's yeast)).